A 664-amino-acid polypeptide reads, in one-letter code: L-glutamate oxidase precursor (664 aa).

The tat-type signal signal peptide spans Met1 to Ala44. Positions 105, 124, 125, 133, 161, 162, 638, 646, and 647 each coordinate FAD.

It belongs to the flavin monoamine oxidase family. LGOX subfamily. In terms of assembly, the mature enzyme is a heterohexamer composed of 2 alpha chains, 2 beta chains and 2 gamma chains (alpha2beta2gamma2). FAD serves as cofactor. In terms of processing, predicted to be exported by the Tat system. The position of the signal peptide cleavage has not been experimentally proven. The precursor form is proteolytically cleaved by an endopeptidase into alpha, beta and gamma chains, which form the stable mature enzyme.

It is found in the secreted. It carries out the reaction L-glutamate + O2 + H2O = H2O2 + 2-oxoglutarate + NH4(+). Its activity is regulated as follows. Activity is stimulated in the presence of Mn(2+), Ca(2+) or Mg(2+). Functionally, catalyzes the oxidative deamination of L-glutamate to 2-ketoglutarate along with the production of ammonia and hydrogen peroxide. In Streptomyces viridosporus (strain ATCC 14672 / DSM 40746 / JCM 4963 / KCTC 9882 / NRRL B-12104 / FH 1290) (Streptomyces ghanaensis), this protein is L-glutamate oxidase precursor.